Reading from the N-terminus, the 264-residue chain is uncharacterized protein (264 aa).

The helical transmembrane segment at 7–27 (LTLGICLVLLIILIVGYVIMT) threads the bilayer.

It belongs to the staphylococcal tandem lipoprotein family.

The protein resides in the cell membrane. This is an uncharacterized protein from Staphylococcus aureus (strain MRSA252).